Here is a 173-residue protein sequence, read N- to C-terminus: Acetyl-CoA decarbonylase/synthase complex subunit epsilon (173 aa).

Belongs to the CdhB family. Heterotetramer of two alpha and two epsilon subunits. The ACDS complex is made up of alpha, epsilon, beta, gamma and delta subunits with a probable stoichiometry of (alpha(2)epsilon(2))(4)-beta(8)-(gamma(1)delta(1))(8).

The protein operates within one-carbon metabolism; methanogenesis from acetate. Part of a complex that catalyzes the reversible cleavage of acetyl-CoA, allowing growth on acetate as sole source of carbon and energy. The alpha-epsilon subcomponent functions as a carbon monoxide dehydrogenase. The precise role of the epsilon subunit is unclear; it may have a stabilizing role within the alpha(2)epsilon(2) component and/or be involved in electron transfer to FAD during a potential FAD-mediated CO oxidation. This Methanothermobacter thermautotrophicus (strain ATCC 29096 / DSM 1053 / JCM 10044 / NBRC 100330 / Delta H) (Methanobacterium thermoautotrophicum) protein is Acetyl-CoA decarbonylase/synthase complex subunit epsilon.